A 256-amino-acid polypeptide reads, in one-letter code: Adenylate kinase (256 aa).

ATP is bound at residue glycine 49–threonine 54. The tract at residues alanine 69–valine 98 is NMP. Residues threonine 70, arginine 75, glycine 96–valine 98, glycine 125–arginine 128, and glutamine 132 contribute to the AMP site. The LID stretch occupies residues glycine 166–aspartate 203. Residues arginine 167 and serine 176–tyrosine 177 each bind ATP. Positions 200 and 211 each coordinate AMP. ATP is bound at residue glutamine 239.

Belongs to the adenylate kinase family. AK2 subfamily. Monomer.

It is found in the cytoplasm. Its subcellular location is the cytosol. The protein localises to the mitochondrion intermembrane space. It carries out the reaction AMP + ATP = 2 ADP. Functionally, catalyzes the reversible transfer of the terminal phosphate group between ATP and AMP. Plays an important role in cellular energy homeostasis and in adenine nucleotide metabolism. Adenylate kinase activity is critical for regulation of the phosphate utilization and the AMP de novo biosynthesis pathways. This Laccaria bicolor (strain S238N-H82 / ATCC MYA-4686) (Bicoloured deceiver) protein is Adenylate kinase.